The primary structure comprises 265 residues: Asparagine-rich protein (265 aa).

An N-terminal signal peptide occupies residues 1 to 21; sequence MSRLTLLVLLVIAAVIQKVHG. 2 disordered regions span residues 20-71 and 88-183; these read HGQG…NRNI and SNQN…NQQY. Composition is skewed to basic and acidic residues over residues 22–35 and 44–55; these read QGRE…HEPG and EKTERNLREPNR. Over residues 88–98 the composition is skewed to low complexity; that stretch reads SNQNNFGNNRS. Residues 115–124 are compositionally biased toward basic and acidic residues; that stretch reads NKSEVEKENG. The span at 152-166 shows a compositional bias: basic residues; the sequence is KVQHRIAKRFQKRHP.

In terms of tissue distribution, nacreous layer of shell (at protein level). Expressed primarily in the mantle with highest level in the mantle pallium and lower level in the mantle edge.

It is found in the secreted. This Pinctada maxima (Silver-lipped pearl oyster) protein is Asparagine-rich protein.